Reading from the N-terminus, the 391-residue chain is NADH-quinone oxidoreductase subunit D (391 aa).

This sequence belongs to the complex I 49 kDa subunit family. NDH-1 is composed of 14 different subunits. Subunits NuoB, C, D, E, F, and G constitute the peripheral sector of the complex.

The protein resides in the cell inner membrane. It catalyses the reaction a quinone + NADH + 5 H(+)(in) = a quinol + NAD(+) + 4 H(+)(out). Its function is as follows. NDH-1 shuttles electrons from NADH, via FMN and iron-sulfur (Fe-S) centers, to quinones in the respiratory chain. The immediate electron acceptor for the enzyme in this species is believed to be ubiquinone. Couples the redox reaction to proton translocation (for every two electrons transferred, four hydrogen ions are translocated across the cytoplasmic membrane), and thus conserves the redox energy in a proton gradient. This Rickettsia akari (strain Hartford) protein is NADH-quinone oxidoreductase subunit D.